We begin with the raw amino-acid sequence, 159 residues long: MDAIATIVELVREVVEPVIEAPFELVDIEYGKIGSDMILSIFVDKPEGITLNDTADLTEIISPVLDTIKPDPFPEQYFLEITSPGLERPLKTKDAVAGAVGKYIHVGLYQAIDKQKVFEGTLLAFEEDELTMEYMDKTRKKTVQIPYSLVSKARLAVKL.

Belongs to the RimP family.

The protein localises to the cytoplasm. Functionally, required for maturation of 30S ribosomal subunits. The protein is Ribosome maturation factor RimP of Streptococcus pneumoniae serotype 19F (strain G54).